Reading from the N-terminus, the 121-residue chain is Small ribosomal subunit protein uS13 (121 aa).

The interval 89 to 121 (MRHRRGLPVRGQHTKNNARTRKGKAVSIAGKKK) is disordered.

The protein belongs to the universal ribosomal protein uS13 family. Part of the 30S ribosomal subunit. Forms a loose heterodimer with protein S19. Forms two bridges to the 50S subunit in the 70S ribosome.

Its function is as follows. Located at the top of the head of the 30S subunit, it contacts several helices of the 16S rRNA. In the 70S ribosome it contacts the 23S rRNA (bridge B1a) and protein L5 of the 50S subunit (bridge B1b), connecting the 2 subunits; these bridges are implicated in subunit movement. Contacts the tRNAs in the A and P-sites. The chain is Small ribosomal subunit protein uS13 from Levilactobacillus brevis (strain ATCC 367 / BCRC 12310 / CIP 105137 / JCM 1170 / LMG 11437 / NCIMB 947 / NCTC 947) (Lactobacillus brevis).